The sequence spans 467 residues: Ethanolamine ammonia-lyase reactivase EutA (467 aa).

This sequence belongs to the EutA family.

The protein localises to the bacterial microcompartment. The protein operates within amine and polyamine degradation; ethanolamine degradation. Its function is as follows. Reactivates suicidally inhibited ethanolamine ammonia-lyase (EAL), cyanocobalamin-inactivated EAL and O(2)-inactivated EAL; requires Mg(2+), ATP and adenosylcobalamin. Reactivation probably occurs by the ATP-dependent exchange of cobalamin. Protects EAL from inhibition by CN-B12, does not have adenosylation activity. In terms of biological role, expression of the eut operon allows this bacteria to use ethanolamine as a carbon, nitrogen and energy source. It relies on cobalamin (vitamin B12) both as a cofactor for the ethanolamine ammonia-lyase (EAL) activity and to induce the operon. EA enhances bacterial survival in macrophages in a concentration-dependent manner, suggesting it is an important nutrient during infection. This chain is Ethanolamine ammonia-lyase reactivase EutA, found in Salmonella typhimurium (strain LT2 / SGSC1412 / ATCC 700720).